Consider the following 445-residue polypeptide: MATRANVPEQVRGAPLVDGLKIQNKNGAVKSRRALGDIGNLVSVPGVQGGKAQPPINRPITRSFRAQLLANAQLERKPINGDNKVPALGPKRQPLAARNPEAQRAVQKKNLVVKQQTKPVEVIETKKEVTKKEVAMSPKNKKVTYSSVLSARSKAACGIVNKPKIIDIDESDKDNHLAAVEYVDDMYSFYKEVEKESQPKMYMHIQTEMNEKMRAILIDWLLEVHIKFELNLETLYLTVNIIDRFLSVKAVPKRELQLVGISALLIASKYEEIWPPQVNDLVYVTDNAYSSRQILVMEKAILGNLEWYLTVPTQYVFLVRFIKASMSDPEMENMVHFLAELGMMHYDTLTFCPSMLAASAVYTARCSLNKSPAWTDTLQFHTGYTESEIMDCSKLLAFLHSRCGESRLRAVYKKYSKAENGGVAMVSPAKSLLSAAADWKKPVSS.

The protein belongs to the cyclin family. Cyclin AB subfamily. As to quaternary structure, interacts with FZR2/CCS52A1, FZR1/CCS52A2 and FZR3/CCS52B. In terms of tissue distribution, expressed in roots, stems and flowers.

Functionally, may induce mitotic cell division. The chain is Cyclin-B1-2 (CYCB1-2) from Arabidopsis thaliana (Mouse-ear cress).